A 404-amino-acid chain; its full sequence is MALSLPLGPRLGSEPLNHPPGAPREADIVGCTVCPASGEESTSPEQAQTLGQDSLGPPEHFQGGPRGNEPAAHPPRWSTPSSYEDPAGGKHCEHPISGLEVLEAEQNSLHLCLLGLGRRLQDLEQGLGHWALAQSGMVQLQALQVDLRGAAERVEALLAFGEGLAQRSEPRAWAALEQILRALGAYRDSIFRRLWQLQAQLVSYSLVFEEANTLDQDLEVEGDSDWPGPGGVWGPWAPSSLPTSTELEWDPAGDIGGLGPLGQKTARTLGVPCELCGQRGPQGRGQGLEEADTSHSRQDMLESGLGHQKRLARHQRHSLLRKPQDKKRQASPHLQDVRLEGNPGAPDPASRQPLTFLLILFLLFLLLVGAMFLLPASGGPCCSHARIPRTPYLVLSYVNGLPPV.

Disordered stretches follow at residues 1-91 and 277-347; these read MALS…GGKH and GQRG…GAPD. Over 1–355 the chain is Cytoplasmic; the sequence is MALSLPLGPR…PDPASRQPLT (355 aa). Residues 39–52 show a composition bias toward polar residues; the sequence is EESTSPEQAQTLGQ. A compositionally biased stretch (basic residues) spans 307–320; the sequence is HQKRLARHQRHSLL. Residues 347-404 form the KASH domain; that stretch reads DPASRQPLTFLLILFLLFLLLVGAMFLLPASGGPCCSHARIPRTPYLVLSYVNGLPPV. A helical; Anchor for type IV membrane protein membrane pass occupies residues 356 to 376; sequence FLLILFLLFLLLVGAMFLLPA. Residues 377-404 lie on the Perinuclear space side of the membrane; that stretch reads SGGPCCSHARIPRTPYLVLSYVNGLPPV.

It belongs to the nesprin family. Core component of LINC complexes which are composed of inner nuclear membrane SUN domain-containing proteins coupled to outer nuclear membrane KASH domain-containing nesprins. SUN and KASH domain-containing proteins seem to bind each other promiscuously; however, differentially expression of LINC complex constituents can give rise to specific assemblies. Probably part of a SUN1-containing LINC complex. Interacts with kinesins KIF5B and KLC1. Post-translationally, the disulfid bond with SUN1 or SUN2 is required for stability of the respective LINC complex under tensile forces.

Its subcellular location is the nucleus outer membrane. Its function is as follows. As a component of the LINC (LInker of Nucleoskeleton and Cytoskeleton) complex, involved in the connection between the nuclear lamina and the cytoskeleton. The nucleocytoplasmic interactions established by the LINC complex play an important role in the transmission of mechanical forces across the nuclear envelope and in nuclear movement and positioning. Behaves as a kinesin cargo, providing a functional binding site for kinesin-1 at the nuclear envelope. Hence may contribute to the establishment of secretory epithelial morphology by promoting kinesin-dependent apical migration of the centrosome and Golgi apparatus and basal localization of the nucleus. The sequence is that of Nesprin-4 (SYNE4) from Homo sapiens (Human).